The primary structure comprises 566 residues: Zinc finger protein 704 (566 aa).

Disordered stretches follow at residues 1–148, 166–203, and 253–324; these read MQAR…ARGA, DFRR…LDQE, and PLVR…DEAD. A compositionally biased stretch (low complexity) spans 12 to 31; the sequence is LGSRRGGAAPAPAPEAAALG. Residues 32 to 55 are compositionally biased toward pro residues; it reads LPPPGPSPAAAPGSWRPPLPPPRG. A compositionally biased stretch (low complexity) spans 56-72; that stretch reads TGPSRAAAASSPVLLLL. The span at 91–100 shows a compositional bias: basic and acidic residues; it reads RVTEKPRGVA. Acidic residues predominate over residues 101 to 128; sequence EEEDDDEEEDEEVVVEVVDGDEDDEDAE. Positions 186–203 are enriched in basic and acidic residues; that stretch reads EDVRTADTKKTSRVLDQE. Residues 267–290 are compositionally biased toward low complexity; the sequence is SGSWKEGAPSSSSSSGYWSWSAPS. The C2H2-type zinc finger occupies 346–371; the sequence is FKCLWKSCGKVLNTAAGIQKHIRAVH. A phosphoserine mark is found at serine 378 and serine 381. 2 disordered regions span residues 409 to 436 and 497 to 535; these read VSPS…CAKT and PVSP…PRGE. Residues 471 to 566 form a sufficient for binding to RE2 sequence motifs region; the sequence is GSAKFTPNGS…WKKACQRFID (96 aa). The short motif at 537–541 is the CR1 element; sequence KKCRK. Positions 555 to 559 match the CR2 motif; it reads CRWKK.

The protein localises to the nucleus. In terms of biological role, transcription factor which binds to RE2 sequence elements in the MYOD1 enhancer. The sequence is that of Zinc finger protein 704 from Mus musculus (Mouse).